The chain runs to 478 residues: Ninja-family protein 8 (478 aa).

Disordered stretches follow at residues 1–247 (MDDD…LTPG), 337–374 (FTAKDKADQTGTKQVDDGKKPQEAGASSSAHAEDEKKA), and 454–478 (DAPAQDNSATLPAFPAGNQATSAEN). Residues 23–35 (KARDAPLEPKAEP) show a composition bias toward basic and acidic residues. Polar residues predominate over residues 169 to 179 (ISISTDDGSTG). Residues 180–189 (ENEDVAESEA) are compositionally biased toward acidic residues. The segment covering 233–242 (SFSGSESSSG) has biased composition (low complexity). Positions 339–358 (AKDKADQTGTKQVDDGKKPQ) are enriched in basic and acidic residues.

This sequence belongs to the Ninja family.

The protein resides in the nucleus. In Zea mays (Maize), this protein is Ninja-family protein 8.